The primary structure comprises 466 residues: Asparagine--tRNA ligase (466 aa).

Belongs to the class-II aminoacyl-tRNA synthetase family. In terms of assembly, homodimer.

Its subcellular location is the cytoplasm. The catalysed reaction is tRNA(Asn) + L-asparagine + ATP = L-asparaginyl-tRNA(Asn) + AMP + diphosphate + H(+). This is Asparagine--tRNA ligase from Wigglesworthia glossinidia brevipalpis.